We begin with the raw amino-acid sequence, 2335 residues long: Serine/threonine-protein kinase tor1 (2335 aa).

HEAT repeat units lie at residues 1–31, 164–201, 331–371, 410–449, 474–512, 522–560, 562–596, 642–679, 684–722, 728–766, 843–880, 904–923, 924–961, 964–1003, and 1005–1042; these read MEYF…SSTK, LYIS…VVCQ, PYLQ…AVKL, PIQE…AREP, YSLI…RDPI, ESVA…RHLA, PDNI…YNPA, PYIQ…VEGE, DVRG…RSGY, LDYP…LDPY, VFLP…IIGP, LLVI…DEFK, FYLP…FGSN, EYMH…SVNF, and DHAS…QLGY. Residues 1226 to 1781 enclose the FAT domain; sequence VISAHASKCN…VYSLTVSSKS (556 aa). One can recognise a PI3K/PI4K catalytic domain in the interval 1955–2269; the sequence is FHHTFEVISS…ARHADYAALS (315 aa). Positions 1961 to 1967 are G-loop; the sequence is VISSKQR. Position 1972 is a phosphothreonine; by PKB/AKT1 (Thr1972). Residues 2134-2142 form a catalytic loop region; sequence GLGDRHPSN. An activation loop region spans residues 2154–2179; the sequence is HIDFGDCFEVAMHREKFPEKIPFRLT. One can recognise an FATC domain in the interval 2303–2335; sequence EQLPVKAQVEKLIQQATAPENLCRCYVGWCSFW.

This sequence belongs to the PI3/PI4-kinase family. In terms of assembly, the target of rapamycin complex 2 (TORC2) is composed of at least bit61, pop3/wat1, sin1, ste20 and tor1. Phosphorylation at Thr-1972 in the ATP-binding region by AKT1 strongly reduces kinase activity.

The protein resides in the cytoplasm. The catalysed reaction is L-seryl-[protein] + ATP = O-phospho-L-seryl-[protein] + ADP + H(+). It carries out the reaction L-threonyl-[protein] + ATP = O-phospho-L-threonyl-[protein] + ADP + H(+). In terms of biological role, catalytic component of TORC2, which regulates multiple cellular processes to control cell growth in response to environmental signals. In response to signals, TORC2 phosphorylates AGC protein kinase family members. TORC2 is required for cell survival under various stress conditions. TORC2 positively controls G1 cell-cycle arrest, sexual development and amino acid uptake. Positively regulates amino acid uptake through the control of expression of amino acid permeases. Responsible for the phosphorylation of AGC kinase gad8 at 'Ser-527' and 'Ser-546', activating gad8 kinase activity and promoting sexual development. The polypeptide is Serine/threonine-protein kinase tor1 (Schizosaccharomyces pombe (strain 972 / ATCC 24843) (Fission yeast)).